The following is a 1281-amino-acid chain: Enterobactin synthase component F (1281 aa).

An elongation/condensation region spans residues 1 to 301 (MSQHLPLVAA…NVLPLGIHIA (301 aa)). The tract at residues 486-891 (SYREMHEQVV…ALPDVKQAVT (406 aa)) is adenylation. The Carrier domain occupies 975-1050 (APKAGSETII…KLATIIDGEE (76 aa)). Residue Ser-1010 is modified to O-(pantetheine 4'-phosphoryl)serine. Residues 1070-1281 (PTLFCFHPAS…GPIIRATLNR (212 aa)) form a thioesterase region. The active-site Proton acceptor; for thioesterase activity is the His-1259.

Belongs to the ATP-dependent AMP-binding enzyme family. EntF subfamily. In terms of assembly, proteins EntB, EntD, EntE and EntF are the component of the enterobactin synthase. Components probably do not form a stable complex. EntF acts as a catalytic monomer. Pantetheine 4'-phosphate is required as a cofactor. Post-translationally, 4'-phosphopantetheine is transferred from CoA to a specific serine of apo-EntF by EntD. Holo-EntF so formed is then acylated with seryl-AMP.

The protein resides in the cytoplasm. It catalyses the reaction 3 2,3-dihydroxybenzoate + 3 L-serine + 6 ATP = enterobactin + 6 AMP + 6 diphosphate + 4 H(+). The catalysed reaction is holo-[peptidyl-carrier protein] + L-serine + ATP = L-seryl-[peptidyl-carrier protein] + AMP + diphosphate. It functions in the pathway siderophore biosynthesis; enterobactin biosynthesis. Its function is as follows. Involved in the biosynthesis of the siderophore enterobactin (enterochelin), which is a macrocyclic trimeric lactone of N-(2,3-dihydroxybenzoyl)-serine. EntF catalyzes the activation of L-serine via ATP-dependent PPi exchange reaction to form seryladenylate. Activated L-serine is loaded onto the peptidyl carrier domain via a thioester linkage to the phosphopanthetheine moiety, forming seryl-S-Ppant-EntF. EntF acts then as the sole catalyst for the formation of the three amide and three ester linkages found in enterobactin, using seryladenylate and 2,3-dihydroxybenzoate-S-Ppant-EntB (DHB-S-Ppant-EntB) as substrates, via the formation of a DHB-Ser-S-Ppant-EntF intermediate. The sequence is that of Enterobactin synthase component F (entF) from Shigella flexneri.